The primary structure comprises 331 residues: Neurogenic differentiation factor 4 (331 aa).

Residues 1 to 80 (MSKTFVKSKE…GPKKKKMTKA (80 aa)) form a disordered region. Residues 52–64 (DSIEEEEEEEEDG) are compositionally biased toward acidic residues. Positions 67–79 (PKRRGPKKKKMTK) are enriched in basic residues. One can recognise a bHLH domain in the interval 87–139 (ARRVKANARERTRMHGLNDALDNLRRVMPCYSKTQKLSKIETLRLARNYIWAL). Residues 246–265 (TPPYEGPLTPPLSISGNFSL) are disordered.

Efficient DNA binding requires dimerization with another bHLH protein. In terms of processing, serine or threonine phosphorylation within the basic region may regulate neurogenic activity.

It localises to the nucleus. Probably acts as a transcriptional activator. Mediates neuronal differentiation. Required for the regulation of amacrine cell fate specification in the retina. In Homo sapiens (Human), this protein is Neurogenic differentiation factor 4 (NEUROD4).